The following is a 401-amino-acid chain: MLKHDSMQVSQDQPIYSEAPLQLLLFVDGRPKSKQQVQRIRAYLKDLQAEYNFELQIIDVGQQPYLAEHFKLVATPALIKIHPEPRQILAGSNIITQLKNLWPRWQAAVDTYVKLQEDLQERVDDNGRVAQPTSTINSVAVSAELLRLSDEIFNLKQEKEKLLEQLQFKDRVIAMLVHDLRNPLTAAAIAIETLQSNYNPDIGQFQRLKPALVVNLLRQARTQAKTIDKMIADLLQVGRGTDTELIIIPQKTEIGLLCLEVLGELRDRYTTKAQKVETDIPQDLPCVYADPERIRQVLINLLDNAIKYTPEGGTISIAGLHRTTQKVQFSIGDTGPGIPTDNRERIFENHYRLERDEAKEGYGIGLSLCQRIIRAHYGQIWVDSNPHGGAWFHFTLPVYPS.

A Histidine kinase domain is found at 175 to 400 (MLVHDLRNPL…WFHFTLPVYP (226 aa)). His-178 carries the post-translational modification Phosphohistidine; by autocatalysis.

Homooligomerizes. Interacts with KaiC. Participates in the KaiABC clock complex, whose core is composed of a KaiC homohexamer, 6 KaiB and up to 6 KaiA dimers. SasA and KaiB(fs) compete to bind to KaiC.

The enzyme catalyses ATP + protein L-histidine = ADP + protein N-phospho-L-histidine.. Functionally, member of the two-component regulatory system SasA/RpaA involved in genome-wide circadian gene expression. One of several clock output pathways. Participates in the Kai clock protein complex, the main circadian regulator in cyanobacteria, via its interaction with KaiC. KaiC enhances the autophosphorylation activity of SasA, which then transfers its phosphate group to RpaA to activate it. In addition to its output function, recruits fold-shifted KaiB (KaiB(fs)) to KaiC to cooperatively form the KaiB(6):KaiC(6) complex (independent of SasA kinase activity). Required for robustness of the circadian rhythm of gene expression and is involved in clock output, also required for adaptation to light/dark cycles. This is Adaptive-response sensory kinase SasA from Trichormus variabilis (strain ATCC 29413 / PCC 7937) (Anabaena variabilis).